Consider the following 208-residue polypeptide: MSSQYSNVENLSPQTIRQVMRELQEMENTPPEGIKVLINESDVTDIQALIDGPAGTPYAIGVFRVKLTLSKDFPQTPPKAYFLTKIFHPNVAANGEICVNTLKKDWKPDLGIKHILLTIKCLLIVPNPESALNEEAGKMLLERYDDYSQRARMMTEIHAQPAKCASTTSDAKDDDGPSTKKHAGLDKKLQDKKKEKLLKEKKRMLKRL.

Positions 14–160 constitute a UBC core domain; sequence QTIRQVMREL…ARMMTEIHAQ (147 aa). Cysteine 98 (glycyl thioester intermediate) is an active-site residue. Positions 159 to 208 are disordered; the sequence is AQPAKCASTTSDAKDDDGPSTKKHAGLDKKLQDKKKEKLLKEKKRMLKRL. The segment covering 170–198 has biased composition (basic and acidic residues); the sequence is DAKDDDGPSTKKHAGLDKKLQDKKKEKLL. Positions 199 to 208 are enriched in basic residues; the sequence is KEKKRMLKRL.

The protein belongs to the ubiquitin-conjugating enzyme family.

It catalyses the reaction S-ubiquitinyl-[E1 ubiquitin-activating enzyme]-L-cysteine + [E2 ubiquitin-conjugating enzyme]-L-cysteine = [E1 ubiquitin-activating enzyme]-L-cysteine + S-ubiquitinyl-[E2 ubiquitin-conjugating enzyme]-L-cysteine.. The protein operates within protein modification; protein ubiquitination. Functionally, catalyzes the covalent attachment of ubiquitin to other proteins. Acts as an essential factor of the anaphase promoting complex/cyclosome (APC/C), a cell cycle-regulated ubiquitin ligase that controls progression through mitosis. Acts by specifically elongating polyubiquitin chains initiated by the E2 enzyme vih/UbcH10 on APC/C substrates, enhancing the degradation of APC/C substrates by the proteasome and promoting mitotic exit. The chain is Ubiquitin-conjugating enzyme E2 S from Drosophila willistoni (Fruit fly).